The sequence spans 340 residues: Alcohol dehydrogenase (340 aa).

Positions 37, 58, 89, 92, 95, 103, and 145 each coordinate Zn(2+).

This sequence belongs to the zinc-containing alcohol dehydrogenase family. It depends on Zn(2+) as a cofactor.

It catalyses the reaction a primary alcohol + NAD(+) = an aldehyde + NADH + H(+). It carries out the reaction a secondary alcohol + NAD(+) = a ketone + NADH + H(+). This is Alcohol dehydrogenase (adh) from Staphylococcus epidermidis (strain ATCC 35984 / DSM 28319 / BCRC 17069 / CCUG 31568 / BM 3577 / RP62A).